The following is a 306-amino-acid chain: OVARIAN TUMOR DOMAIN-containing deubiquitinating enzyme 1 (306 aa).

The OTU domain occupies 81–295; that stretch reads IGIRRTRGDG…PGHYDILYPK (215 aa). Asp89 is an active-site residue. The active-site Nucleophile is the Cys92. Catalysis depends on residues His259 and His288.

The protein belongs to the peptidase C65 family.

It catalyses the reaction Thiol-dependent hydrolysis of ester, thioester, amide, peptide and isopeptide bonds formed by the C-terminal Gly of ubiquitin (a 76-residue protein attached to proteins as an intracellular targeting signal).. With respect to regulation, cleavage activities for 'Lys-48'- and 'Lys-63'-linked ubiquitin (UB) tetramers is inhibited by UB aldehyde and N-ethylmaleimide but not by the metalloprotease inhibitors 1,10-phenanthroline and EDTA, and the serine protease inhibitor phenylmethylsulfonyl fluoride. Functionally, hydrolase that can remove conjugated ubiquitin from proteins in vitro and may therefore play an important regulatory role at the level of protein turnover by preventing degradation. Cysteine protease with a preference for Met-1 and 'Lys-48' over 'Lys-63'-linked ubiquitin (UB) tetramers (e.g. Ub2, Ub3 and Ub4) as substrates. This chain is OVARIAN TUMOR DOMAIN-containing deubiquitinating enzyme 1, found in Arabidopsis thaliana (Mouse-ear cress).